The primary structure comprises 317 residues: Ribosomal RNA small subunit methyltransferase H (317 aa).

Residues 34 to 36 (GGH), Asp53, Phe80, Asp98, and Gln105 contribute to the S-adenosyl-L-methionine site.

It belongs to the methyltransferase superfamily. RsmH family.

The protein resides in the cytoplasm. It carries out the reaction cytidine(1402) in 16S rRNA + S-adenosyl-L-methionine = N(4)-methylcytidine(1402) in 16S rRNA + S-adenosyl-L-homocysteine + H(+). In terms of biological role, specifically methylates the N4 position of cytidine in position 1402 (C1402) of 16S rRNA. This is Ribosomal RNA small subunit methyltransferase H from Tropheryma whipplei (strain TW08/27) (Whipple's bacillus).